We begin with the raw amino-acid sequence, 66 residues long: Beta-toxin Chui2 (66 aa).

The LCN-type CS-alpha/beta domain occupies 1–66; that stretch reads KEGYIVNSYT…VWPLKNKTCN (66 aa). Cystine bridges form between cysteine 12–cysteine 65, cysteine 16–cysteine 41, cysteine 25–cysteine 46, and cysteine 29–cysteine 48. At asparagine 66 the chain carries Asparagine amide.

Belongs to the long (4 C-C) scorpion toxin superfamily. Sodium channel inhibitor family. Beta subfamily. In terms of tissue distribution, expressed by the venom gland.

Its subcellular location is the secreted. Its function is as follows. Beta toxins bind voltage-independently at site-4 of sodium channels (Nav) and shift the voltage of activation toward more negative potentials thereby affecting sodium channel activation and promoting spontaneous and repetitive firing. This Centruroides huichol (Scorpion) protein is Beta-toxin Chui2.